A 354-amino-acid chain; its full sequence is Thymidylate synthase (354 aa).

The disordered stretch occupies residues M1 to G32. R53 is a dUMP binding site. S117 carries the post-translational modification Phosphoserine. Position 178 to 179 (R178 to R179) interacts with dUMP. C198 acts as the Nucleophile in catalysis. Residues R218 to D221, N229, and H259 to Y261 each bind dUMP. A (6R)-5,10-methylene-5,6,7,8-tetrahydrofolate-binding site is contributed by D221. K349 is covalently cross-linked (Glycyl lysine isopeptide (Lys-Gly) (interchain with G-Cter in SUMO2)). A353 lines the (6R)-5,10-methylene-5,6,7,8-tetrahydrofolate pocket.

This sequence belongs to the thymidylate synthase family. Homodimer.

The protein resides in the nucleus. It is found in the cytoplasm. It localises to the mitochondrion. The protein localises to the mitochondrion matrix. Its subcellular location is the mitochondrion inner membrane. The catalysed reaction is dUMP + (6R)-5,10-methylene-5,6,7,8-tetrahydrofolate = 7,8-dihydrofolate + dTMP. Its pathway is pyrimidine metabolism; dTTP biosynthesis. Functionally, catalyzes the reductive methylation of 2'-deoxyuridine 5'-monophosphate (dUMP) to thymidine 5'-monophosphate (dTMP), using the cosubstrate, 5,10- methylenetetrahydrofolate (CH2H4folate) as a 1-carbon donor and reductant and contributes to the de novo mitochondrial thymidylate biosynthesis pathway. This is Thymidylate synthase (TYMS) from Bos taurus (Bovine).